The primary structure comprises 189 residues: Elongation factor P (189 aa).

Belongs to the elongation factor P family.

The protein resides in the cytoplasm. It functions in the pathway protein biosynthesis; polypeptide chain elongation. Functionally, involved in peptide bond synthesis. Stimulates efficient translation and peptide-bond synthesis on native or reconstituted 70S ribosomes in vitro. Probably functions indirectly by altering the affinity of the ribosome for aminoacyl-tRNA, thus increasing their reactivity as acceptors for peptidyl transferase. The sequence is that of Elongation factor P from Rhizobium rhizogenes (strain K84 / ATCC BAA-868) (Agrobacterium radiobacter).